A 256-amino-acid polypeptide reads, in one-letter code: Type III pantothenate kinase (256 aa).

6–13 (DVGNTNIV) contacts ATP. 107–110 (GADR) serves as a coordination point for substrate. D109 acts as the Proton acceptor in catalysis. D129 contacts K(+). An ATP-binding site is contributed by T132. T184 is a binding site for substrate.

The protein belongs to the type III pantothenate kinase family. As to quaternary structure, homodimer. NH4(+) serves as cofactor. It depends on K(+) as a cofactor.

The protein localises to the cytoplasm. It carries out the reaction (R)-pantothenate + ATP = (R)-4'-phosphopantothenate + ADP + H(+). It functions in the pathway cofactor biosynthesis; coenzyme A biosynthesis; CoA from (R)-pantothenate: step 1/5. Catalyzes the phosphorylation of pantothenate (Pan), the first step in CoA biosynthesis. The protein is Type III pantothenate kinase of Pelotomaculum thermopropionicum (strain DSM 13744 / JCM 10971 / SI).